Consider the following 204-residue polypeptide: Ribosome maturation factor RimP (204 aa).

The protein belongs to the RimP family.

It is found in the cytoplasm. In terms of biological role, required for maturation of 30S ribosomal subunits. The chain is Ribosome maturation factor RimP from Allorhizobium ampelinum (strain ATCC BAA-846 / DSM 112012 / S4) (Agrobacterium vitis (strain S4)).